A 147-amino-acid polypeptide reads, in one-letter code: Hemoglobin subunit beta (147 aa).

At valine 2 the chain carries N-acetylvaline. Positions 3–147 (HLTGEEKSAV…VANALAHKYH (145 aa)) constitute a Globin domain. Residue threonine 13 is modified to Phosphothreonine. Serine 45 carries the post-translational modification Phosphoserine. Position 60 is an N6-acetyllysine (lysine 60). A heme b-binding site is contributed by histidine 64. Residue lysine 83 is modified to N6-acetyllysine. Residue histidine 93 participates in heme b binding. Residue cysteine 94 is modified to S-nitrosocysteine. Lysine 145 carries the N6-acetyllysine modification.

This sequence belongs to the globin family. In terms of assembly, heterotetramer of two alpha chains and two beta chains. As to expression, red blood cells.

Functionally, involved in oxygen transport from the lung to the various peripheral tissues. The chain is Hemoglobin subunit beta (HBB) from Ateles paniscus (Black spider monkey).